Here is a 418-residue protein sequence, read N- to C-terminus: Sonic hedgehog protein (418 aa).

The N-terminal stretch at 1–23 is a signal peptide; the sequence is MRLLTRVLLVSLLTLSLVVSGLA. Residue Cys24 is the site of N-palmitoyl cysteine attachment. The short motif at 32–38 is the Cardin-Weintraub element; it reads RRRHPKK. Positions 89, 90, 95, 125, 126, 129, and 131 each coordinate Ca(2+). The Zn(2+) site is built by His140, Asp147, and His182. Gly197 carries the Cholesterol glycine ester lipid modification.

Belongs to the hedgehog family. As to quaternary structure, interacts with HHATL/GUP1 which negatively regulates HHAT-mediated palmitoylation of the SHH N-terminus. Interacts with BOC and CDON. Interacts with HHIP. Interacts with DISP1 via its cholesterol anchor. Interacts with SCUBE2. In terms of assembly, multimer. Post-translationally, the C-terminal domain displays an autoproteolysis activity and a cholesterol transferase activity. Both activities result in the cleavage of the full-length protein and covalent attachment of a cholesterol moiety to the C-terminal of the newly generated N-terminal fragment (ShhN). Cholesterylation is required for the sonic hedgehog protein N-product targeting to lipid rafts and multimerization. ShhN is the active species in both local and long-range signaling, whereas the C-product (ShhC) is degraded in the reticulum endoplasmic. In terms of processing, N-palmitoylation by HHAT of ShhN is required for sonic hedgehog protein N-product multimerization and full activity. It is a prerequisite for the membrane-proximal positioning and the subsequent shedding of this N-terminal peptide. The lipidated N- and C-terminal peptides of ShhNp can be cleaved (shedding). The N-terminal palmitoylated peptide is cleaved at the Cardin-Weintraub (CW) motif site. The cleavage reduced the interactions with heparan sulfate. The cleavage is enhanced by SCUBE2. In terms of tissue distribution, expressed in the ventral midline of the neural tube and brain. Also found in the notochord and in developing fin bud. In the developing brain, expression occurs in domains that include a discrete region in the floor of the diencephalon.

The protein localises to the endoplasmic reticulum membrane. Its subcellular location is the golgi apparatus membrane. It is found in the cell membrane. It catalyses the reaction glycyl-L-cysteinyl-[protein] + cholesterol + H(+) = [protein]-C-terminal glycyl cholesterol ester + N-terminal L-cysteinyl-[protein]. In terms of biological role, the C-terminal part of the sonic hedgehog protein precursor displays an autoproteolysis and a cholesterol transferase activity. Both activities result in the cleavage of the full-length protein into two parts (ShhN and ShhC) followed by the covalent attachment of a cholesterol moiety to the C-terminal of the newly generated ShhN. Both activities occur in the endoplasmic reticulum. Once cleaved, ShhC is degraded in the endoplasmic reticulum. The dually lipidated sonic hedgehog protein N-product (ShhNp) is a morphogen which is essential for a variety of patterning events during development. Involved in dorso-ventral patterning of the brain and in early patterning of the developing eyes. Binds to the patched (PTCH1) receptor, which functions in association with smoothened (SMO), to activate the transcription of target genes. In the absence of SHH, PTCH1 represses the constitutive signaling activity of SMO. This Danio rerio (Zebrafish) protein is Sonic hedgehog protein (shha).